The chain runs to 406 residues: Phosphopentomutase (406 aa).

Mn(2+)-binding residues include Asp10, Asp305, His310, Asp346, His347, and His358.

It belongs to the phosphopentomutase family. Mn(2+) serves as cofactor.

It localises to the cytoplasm. It carries out the reaction 2-deoxy-alpha-D-ribose 1-phosphate = 2-deoxy-D-ribose 5-phosphate. It catalyses the reaction alpha-D-ribose 1-phosphate = D-ribose 5-phosphate. Its pathway is carbohydrate degradation; 2-deoxy-D-ribose 1-phosphate degradation; D-glyceraldehyde 3-phosphate and acetaldehyde from 2-deoxy-alpha-D-ribose 1-phosphate: step 1/2. Functionally, isomerase that catalyzes the conversion of deoxy-ribose 1-phosphate (dRib-1-P) and ribose 1-phosphate (Rib-1-P) to deoxy-ribose 5-phosphate (dRib-5-P) and ribose 5-phosphate (Rib-5-P), respectively. The sequence is that of Phosphopentomutase from Vibrio cholerae serotype O1 (strain ATCC 39315 / El Tor Inaba N16961).